The primary structure comprises 289 residues: Release factor glutamine methyltransferase (289 aa).

S-adenosyl-L-methionine is bound by residues 130-134 (GTGTG), Asp-153, Trp-182, and Asn-196. 196 to 199 (NPPY) serves as a coordination point for substrate.

It belongs to the protein N5-glutamine methyltransferase family. PrmC subfamily.

It catalyses the reaction L-glutaminyl-[peptide chain release factor] + S-adenosyl-L-methionine = N(5)-methyl-L-glutaminyl-[peptide chain release factor] + S-adenosyl-L-homocysteine + H(+). Methylates the class 1 translation termination release factors RF1/PrfA and RF2/PrfB on the glutamine residue of the universally conserved GGQ motif. In Agrobacterium fabrum (strain C58 / ATCC 33970) (Agrobacterium tumefaciens (strain C58)), this protein is Release factor glutamine methyltransferase.